A 239-amino-acid polypeptide reads, in one-letter code: DNA repair protein RecO (239 aa).

This sequence belongs to the RecO family.

In terms of biological role, involved in DNA repair and RecF pathway recombination. This is DNA repair protein RecO from Aromatoleum aromaticum (strain DSM 19018 / LMG 30748 / EbN1) (Azoarcus sp. (strain EbN1)).